Consider the following 323-residue polypeptide: Aquaporin-4 (323 aa).

Residues 1–36 (MSDGAAARRWGKCGHSCSRESIMVAFKGVWTQAFWK) are Cytoplasmic-facing. S-palmitoyl cysteine attachment occurs at residues Cys13 and Cys17. A helical transmembrane segment spans residues 37 to 57 (AVSAEFLATLIFVLLGVGSTI). The Extracellular portion of the chain corresponds to 58-69 (NWGGSENPLPVD). Residues 70-89 (MVLISLCFGLSIATMVQCFG) traverse the membrane as a helical segment. Over 90–93 (HISG) the chain is Cytoplasmic. The discontinuously helical intramembrane region spans 94–101 (GHINPAVT). The short motif at 97-99 (NPA) is the NPA 1 element. At 102–115 (VAMVCTRKISIAKS) the chain is on the cytoplasmic side. The residue at position 111 (Ser111) is a Phosphoserine; by PKG. Residues 116–136 (VFYIIAQCLGAIIGAGILYLV) traverse the membrane as a helical segment. The Extracellular portion of the chain corresponds to 137 to 155 (TPPSVVGGLGVTTVHGNLT). The N-linked (GlcNAc...) asparagine glycan is linked to Asn153. A helical membrane pass occupies residues 156–176 (AGHGLLVELIITFQLVFTIFA). Over 177 to 184 (SCDSKRTD) the chain is Cytoplasmic. Position 180 is a phosphoserine; by PKC (Ser180). The chain crosses the membrane as a helical span at residues 185 to 205 (VTGSIALAIGFSVAIGHLFAI). Asn206 carries N-linked (GlcNAc...) asparagine glycosylation. The Extracellular segment spans residues 206-208 (NYT). Residues 209-222 (GASMNPARSFGPAV) constitute an intramembrane region (discontinuously helical). Positions 213–215 (NPA) match the NPA 2 motif. The Extracellular portion of the chain corresponds to 223–231 (IMGNWANHW). A helical membrane pass occupies residues 232 to 252 (IYWVGPIMGAVLAGALYEYVF). Topologically, residues 253-323 (CPDVELKRRL…DSSGEVLSSV (71 aa)) are cytoplasmic. A phosphoserine mark is found at Ser276 and Ser285. Thr289 is modified (phosphothreonine). Position 321 is a phosphoserine (Ser321).

Belongs to the MIP/aquaporin (TC 1.A.8) family. Homotetramer. The tetramers can form oligomeric arrays in membranes. The size of the oligomers differs between tissues and is smaller in skeletal muscle than in brain. Interaction between AQP4 oligomeric arrays in close-by cells can contribute to cell-cell adhesion. Part of a complex containing MLC1, TRPV4, HEPACAM and ATP1B1. Phosphorylation by PKC at Ser-180 reduces conductance by 50%. Phosphorylation by PKG at Ser-111 in response to glutamate increases conductance by 40%; this increase is not due to increased presence at the cell membrane. Post-translationally, isoform 2: Palmitoylated on its N-terminal region. Isoform 1: Not palmitoylated. In terms of tissue distribution, detected in brain cortex, especially around cortical blood vessels, and subjacent to pia, with lower levels in parenchymal membranes. Detected in ependymal and astroglial cells in brain. Detected in supporting Hensen's cells, inner sulcus cells and Claudius cells in the inner ear. Detected in skeletal muscle. Detected in gastric parietal cells. Detected in principal cells in collecting ducts in kidney medulla (at protein level). Detected in brain, heart and skeletal muscle.

The protein localises to the cell membrane. It is found in the basolateral cell membrane. The protein resides in the endosome membrane. Its subcellular location is the sarcolemma. It localises to the cell projection. The enzyme catalyses H2O(in) = H2O(out). Functionally, forms a water-specific channel. Plays an important role in brain water homeostasis and in glymphatic solute transport. Required for a normal rate of water exchange across the blood brain interface. Required for normal levels of cerebrospinal fluid influx into the brain cortex and parenchyma along paravascular spaces that surround penetrating arteries, and for normal drainage of interstitial fluid along paravenous drainage pathways. Thereby, it is required for normal clearance of solutes from the brain interstitial fluid, including soluble beta-amyloid peptides derived from APP. Plays a redundant role in urinary water homeostasis and urinary concentrating ability. This chain is Aquaporin-4 (Aqp4), found in Mus musculus (Mouse).